The primary structure comprises 224 residues: Protein FAM3D (224 aa).

An N-terminal signal peptide occupies residues 1-25; that stretch reads MRVSGVLRLLALIFAIVTTWMFIRS. 2 disulfide bridges follow: C55/C83 and C61/C218. Residues 64 to 222 form the GG-type lectin domain; sequence NYFAFKICSG…LEMEGCMPPK (159 aa). N107 carries an N-linked (GlcNAc...) asparagine glycan.

It belongs to the FAM3 family. Abundantly expressed in placenta and weakly expressed in small intestine.

The protein localises to the secreted. The protein is Protein FAM3D (FAM3D) of Homo sapiens (Human).